A 589-amino-acid polypeptide reads, in one-letter code: Protein OS-9 homolog (589 aa).

The N-terminal stretch at 1 to 21 (MFSILNKLGIIWLALANISNC) is a signal peptide. N-linked (GlcNAc...) asparagine glycans are attached at residues Asn-17, Asn-61, and Asn-90. Residues 130–288 (KDCVFAYGSN…VIGVPKLCSL (159 aa)) form the MRH domain. Cysteines 132 and 148 form a disulfide. A mannooligosaccharide derivative-binding residues include Trp-143, Gln-155, Asp-241, Arg-247, Glu-270, and Tyr-276. Disulfide bonds link Cys-240/Cys-274 and Cys-255/Cys-286. Asn-426 is a glycosylation site (N-linked (GlcNAc...) asparagine). Residues 497–520 (GKGSALDSTNNDKNNKATAENDKQ) form a disordered region. The segment covering 509–519 (KNNKATAENDK) has biased composition (basic and acidic residues). The short motif at 586–589 (HDEL) is the Prevents secretion from ER element.

Belongs to the OS-9 family. In terms of assembly, interacts with missfolded ER lumenal proteins.

The protein localises to the endoplasmic reticulum membrane. In terms of biological role, lectin involved in the quality control of the secretory pathway. As a member of the endoplasmic reticulum-associated degradation lumenal (ERAD-L) surveillance system, targets misfolded endoplasmic reticulum lumenal glycoproteins for degradation. The sequence is that of Protein OS-9 homolog (YOS9) from Debaryomyces hansenii (strain ATCC 36239 / CBS 767 / BCRC 21394 / JCM 1990 / NBRC 0083 / IGC 2968) (Yeast).